Consider the following 368-residue polypeptide: MDPDRQADIAALDATLTTVERVIDVDGLRGRIEQLEKDASDPQLWDDQARAQKVTSDLSHAQGELRRIEELRGRLEDLPVLYELAAEEGGSDEVAEADAELTKLREDIEAMEVRTLLSGEYDEREALVTIRSGAGGVDAADWAEMLMRMYIRWAEQHKYPVEVFDTSYAEEAGIKSATFAVHAPYAYGNLSVEQGTHRLVRISPFDNQNRRQTSFADVEVLPVTETTDHIEIPEGDVRVDVYRSSGPGGQSVNTTDSAVRLTHIPTGIVVTCQNEKSQLQNKVSAMRVLQAKLLERKRLEERAEMDALKGDGGSSWGNQMRSYVLHPYQMVKDLRTEYEVGNPSAVLDGDIDGFLEAGIRWRNRKDDE.

Q250 is modified (N5-methylglutamine).

This sequence belongs to the prokaryotic/mitochondrial release factor family. Methylated by PrmC. Methylation increases the termination efficiency of RF2.

The protein resides in the cytoplasm. In terms of biological role, peptide chain release factor 2 directs the termination of translation in response to the peptide chain termination codons UGA and UAA. This Mycolicibacterium vanbaalenii (strain DSM 7251 / JCM 13017 / BCRC 16820 / KCTC 9966 / NRRL B-24157 / PYR-1) (Mycobacterium vanbaalenii) protein is Peptide chain release factor 2.